Reading from the N-terminus, the 554-residue chain is Formate--tetrahydrofolate ligase (554 aa).

Position 64 to 71 (64 to 71) interacts with ATP; the sequence is TPYGEGKT.

It belongs to the formate--tetrahydrofolate ligase family.

The enzyme catalyses (6S)-5,6,7,8-tetrahydrofolate + formate + ATP = (6R)-10-formyltetrahydrofolate + ADP + phosphate. The protein operates within one-carbon metabolism; tetrahydrofolate interconversion. This chain is Formate--tetrahydrofolate ligase, found in Caldicellulosiruptor saccharolyticus (strain ATCC 43494 / DSM 8903 / Tp8T 6331).